We begin with the raw amino-acid sequence, 175 residues long: MLVVLVGMMGAGKTTVGREYAKRHQMRFVDCDHEIEARTGVKVPTIFEIEGEAGFRRRESQLLDELTHETGLVLATGGGVVLDPANRAVLAARGIVVYLNVPTQVLWERTRNDRNRPLLQVSNPRERIESLYRERDPLYREVADIIVDGGRGNPGGMVRQVEKAIQNFHKKTCEH.

10-15 (GAGKTT) is a binding site for ATP. Thr14 is a Mg(2+) binding site. The substrate site is built by Asp32, Arg56, and Gly78. Arg116 lines the ATP pocket. Arg135 contacts substrate.

This sequence belongs to the shikimate kinase family. As to quaternary structure, monomer. Requires Mg(2+) as cofactor.

It localises to the cytoplasm. The catalysed reaction is shikimate + ATP = 3-phosphoshikimate + ADP + H(+). It functions in the pathway metabolic intermediate biosynthesis; chorismate biosynthesis; chorismate from D-erythrose 4-phosphate and phosphoenolpyruvate: step 5/7. Catalyzes the specific phosphorylation of the 3-hydroxyl group of shikimic acid using ATP as a cosubstrate. The protein is Shikimate kinase of Aromatoleum aromaticum (strain DSM 19018 / LMG 30748 / EbN1) (Azoarcus sp. (strain EbN1)).